The primary structure comprises 47 residues: ATP-dependent zinc metalloprotease FTSH, chloroplastic (47 aa).

It in the N-terminal section; belongs to the AAA ATPase family. In the C-terminal section; belongs to the peptidase M41 family. Requires Zn(2+) as cofactor.

It localises to the plastid. It is found in the chloroplast membrane. In terms of biological role, seems to act as an ATP-dependent zinc metallopeptidase. In Populus euphratica (Euphrates poplar), this protein is ATP-dependent zinc metalloprotease FTSH, chloroplastic.